The sequence spans 154 residues: Large ribosomal subunit protein uL22c (154 aa).

Belongs to the universal ribosomal protein uL22 family. As to quaternary structure, part of the 50S ribosomal subunit.

It localises to the plastid. It is found in the chloroplast. Functionally, this protein binds specifically to 23S rRNA. In terms of biological role, the globular domain of the protein is located near the polypeptide exit tunnel on the outside of the subunit, while an extended beta-hairpin is found that lines the wall of the exit tunnel in the center of the 70S ribosome. This is Large ribosomal subunit protein uL22c (rpl22) from Jasminum nudiflorum (Winter jasmine).